The following is a 274-amino-acid chain: 2-dehydro-3-deoxyphosphooctonate aldolase (274 aa).

Belongs to the KdsA family.

It localises to the cytoplasm. It catalyses the reaction D-arabinose 5-phosphate + phosphoenolpyruvate + H2O = 3-deoxy-alpha-D-manno-2-octulosonate-8-phosphate + phosphate. It functions in the pathway carbohydrate biosynthesis; 3-deoxy-D-manno-octulosonate biosynthesis; 3-deoxy-D-manno-octulosonate from D-ribulose 5-phosphate: step 2/3. The protein operates within bacterial outer membrane biogenesis; lipopolysaccharide biosynthesis. This chain is 2-dehydro-3-deoxyphosphooctonate aldolase, found in Legionella pneumophila (strain Lens).